Reading from the N-terminus, the 525-residue chain is Protein-export membrane protein SecD (525 aa).

Helical transmembrane passes span 16–36, 368–388, 395–415, 421–441, 466–486, and 488–508; these read VLLL…KGLT, QAII…YFHY, IPVA…AALI, LPSI…QIVI, AFFI…FLLV, and FVGT…IGVL.

The protein belongs to the SecD/SecF family. SecD subfamily. Part of the protein translocation apparatus. Forms a complex with SecF.

The protein localises to the cell membrane. Involved in protein export. The protein is Protein-export membrane protein SecD of Thermococcus gammatolerans (strain DSM 15229 / JCM 11827 / EJ3).